We begin with the raw amino-acid sequence, 133 residues long: Hexon-interlacing protein (133 aa).

The stretch at 97-127 (REEDALSVVLTRMEELSQQLQDLFAKVALLN) forms a coiled coil.

This sequence belongs to the adenoviridae hexon-interlacing protein family. As to quaternary structure, homotrimer. Interacts with hexon protein; this interaction tethers the hexons together. Self-interacts with adjacent proteins. Interacts with kinesin light chain KLC1; this interaction leads to capsid disruption at the nuclear pore complex during virus entry into host cell.

Its subcellular location is the virion. The protein localises to the host nucleus. In terms of biological role, structural component of the virion that acts as a cement protein on the capsid exterior and forms triskelion structures consisting of three molecules that stabilize three hexon trimers at the center of each icosahedral facet and fixes the peripentonal hexons. Dispensable for assembly. During virus entry, recruits the anterograde motor kinesin-1 to the capsid docked at the nuclear pore complex thereby subjecting the docked capsid to a pulling force. The resulting tension leads to capsid disruption, dispersion of capsid fragments toward cell periphery and eventually viral DNA entry into the host nucleus. The sequence is that of Hexon-interlacing protein from Homo sapiens (Human).